Consider the following 421-residue polypeptide: Imidazolonepropionase (421 aa).

Positions 80 and 82 each coordinate Fe(3+). Zn(2+)-binding residues include histidine 80 and histidine 82. The 4-imidazolone-5-propanoate site is built by arginine 89, tyrosine 152, and histidine 185. Tyrosine 152 lines the N-formimidoyl-L-glutamate pocket. Histidine 249 lines the Fe(3+) pocket. Zn(2+) is bound at residue histidine 249. Glutamate 252 is a 4-imidazolone-5-propanoate binding site. Aspartate 324 contacts Fe(3+). Aspartate 324 provides a ligand contact to Zn(2+). 2 residues coordinate N-formimidoyl-L-glutamate: asparagine 326 and glycine 328. Residue serine 329 coordinates 4-imidazolone-5-propanoate.

The protein belongs to the metallo-dependent hydrolases superfamily. HutI family. In terms of assembly, homodimer. The cofactor is Zn(2+). Requires Fe(3+) as cofactor.

It localises to the cytoplasm. It carries out the reaction 4-imidazolone-5-propanoate + H2O = N-formimidoyl-L-glutamate. The protein operates within amino-acid degradation; L-histidine degradation into L-glutamate; N-formimidoyl-L-glutamate from L-histidine: step 3/3. Its function is as follows. Catalyzes the hydrolytic cleavage of the carbon-nitrogen bond in imidazolone-5-propanoate to yield N-formimidoyl-L-glutamate. It is the third step in the universal histidine degradation pathway. In Bacillus subtilis (strain 168), this protein is Imidazolonepropionase.